The chain runs to 137 residues: MKRLEKISSIVPILLRITLNLALIMVGFTLVAFLIREAFTIFNNIFFLDTDVSYYYMTQDILTFFLYFEFIALIVKYFESHFHFPLRYFIYIGITAIIRFIIVDHSSATSTLILSGAILLLVAALFLANTKLLKREG.

A run of 4 helical transmembrane segments spans residues 15–35 (LRIT…AFLI), 55–75 (YYMT…ALIV), 82–102 (FHFP…RFII), and 108–128 (ATST…LFLA).

The protein belongs to the PsiE family.

It localises to the cell membrane. The sequence is that of Protein PsiE homolog from Listeria innocua serovar 6a (strain ATCC BAA-680 / CLIP 11262).